An 861-amino-acid chain; its full sequence is Seed linoleate 9S-lipoxygenase-3 (861 aa).

The region spanning 41–166 is the PLAT domain; that stretch reads QGFDILGSTV…HHKIDRIFFA (126 aa). Residues 169–861 form the Lipoxygenase domain; the sequence is TYLPSETPAP…FRGIPNSISI (693 aa). Residues 215–257 form a disordered region; it reads NPDSGENHARPVLGGSETYPYPRRGRTGRKPTRKDPNSESRSD. Over residues 237–246 the composition is skewed to basic residues; it reads RRGRTGRKPT. Basic and acidic residues predominate over residues 247–257; it reads RKDPNSESRSD. Residues histidine 522, histidine 527, histidine 713, asparagine 717, and isoleucine 861 each coordinate Fe cation.

Belongs to the lipoxygenase family. The cofactor is Fe cation.

Its subcellular location is the cytoplasm. The enzyme catalyses (9Z,12Z)-octadecadienoate + O2 = (9S)-hydroperoxy-(10E,12Z)-octadecadienoate. It participates in lipid metabolism; oxylipin biosynthesis. Functionally, plant lipoxygenase may be involved in a number of diverse aspects of plant physiology including growth and development, pest resistance, and senescence or responses to wounding. It catalyzes the hydroperoxidation of lipids containing a cis,cis-1,4-pentadiene structure. The chain is Seed linoleate 9S-lipoxygenase-3 (LOX1.3) from Pisum sativum (Garden pea).